Here is a 638-residue protein sequence, read N- to C-terminus: Chaperone protein DnaK (638 aa).

T198 is subject to Phosphothreonine; by autocatalysis. 2 disordered regions span residues 539–559 (DGLAHSTKKQVEEAGDALASD) and 602–638 (QAKAQGEAEGQAHDAGQEKPADDVVDAEFEEVKDDKK). Positions 611–623 (GQAHDAGQEKPAD) are enriched in basic and acidic residues. A compositionally biased stretch (acidic residues) spans 624-638 (DVVDAEFEEVKDDKK).

It belongs to the heat shock protein 70 family.

Its function is as follows. Acts as a chaperone. The chain is Chaperone protein DnaK from Shewanella frigidimarina (strain NCIMB 400).